The following is a 284-amino-acid chain: MKDSHQTIGVFVRPTHYQNPLFKELEQAKEWVLKLLEDEGFESFMIDSLDGAKDERLIEKADAFLCLGGDGTILGALRMTHSYNKPCFGVRIGNLGFLSAVELNGLKDFLQDLKQDRIKLEEHLALEGRIGNTSFYAINEIVIAKKKALGVLDIKAYAGHTPFNTYKGDGLIIATPLGSTAYNLSAHGPIVHALSQSYILTPLCDFSLTQRPLVLGAEFCLNFCTHEDALVVIDGQSTYDLKANQPLYIQKSPTTTKLLQKNSRDYFKVLKEKLLWGESPSKKR.

Residue D70 is the Proton acceptor of the active site. NAD(+) is bound by residues 70 to 71 (DG), 139 to 140 (NE), K167, D169, L177, 180 to 185 (TAYNLS), and Q236.

This sequence belongs to the NAD kinase family. It depends on a divalent metal cation as a cofactor.

The protein localises to the cytoplasm. It carries out the reaction NAD(+) + ATP = ADP + NADP(+) + H(+). In terms of biological role, involved in the regulation of the intracellular balance of NAD and NADP, and is a key enzyme in the biosynthesis of NADP. Catalyzes specifically the phosphorylation on 2'-hydroxyl of the adenosine moiety of NAD to yield NADP. The protein is NAD kinase of Helicobacter pylori (strain P12).